The chain runs to 127 residues: Riboflavin kinase (127 aa).

A CDP-binding site is contributed by 10 to 15 (GLGEGR). 2 residues coordinate Mg(2+): Thr39 and Asn41. FMN is bound by residues Thr96 and Glu104. CDP is bound at residue 109 to 112 (IQLR).

It belongs to the archaeal riboflavin kinase family. Requires Mg(2+) as cofactor.

The enzyme catalyses riboflavin + CTP = CDP + FMN + H(+). It participates in cofactor biosynthesis; FMN biosynthesis; FMN from riboflavin (CTP route): step 1/1. Catalyzes the CTP-dependent phosphorylation of riboflavin (vitamin B2) to form flavin mononucleotide (FMN). This chain is Riboflavin kinase, found in Methanococcus maripaludis (strain C5 / ATCC BAA-1333).